The primary structure comprises 251 residues: Diphthine synthase (251 aa).

Residues leucine 9, aspartate 84, valine 87, 112–113 (SI), leucine 160, alanine 194, and histidine 219 contribute to the S-adenosyl-L-methionine site.

The protein belongs to the diphthine synthase family. In terms of assembly, homodimer.

The catalysed reaction is 2-[(3S)-amino-3-carboxypropyl]-L-histidyl-[translation elongation factor 2] + 3 S-adenosyl-L-methionine = diphthine-[translation elongation factor 2] + 3 S-adenosyl-L-homocysteine + 3 H(+). Its pathway is protein modification; peptidyl-diphthamide biosynthesis. In terms of biological role, S-adenosyl-L-methionine-dependent methyltransferase that catalyzes the trimethylation of the amino group of the modified target histidine residue in translation elongation factor 2 (EF-2), to form an intermediate called diphthine. The three successive methylation reactions represent the second step of diphthamide biosynthesis. The polypeptide is Diphthine synthase (Archaeoglobus fulgidus (strain ATCC 49558 / DSM 4304 / JCM 9628 / NBRC 100126 / VC-16)).